Consider the following 450-residue polypeptide: tRNA (guanine-N(7)-)-methyltransferase non-catalytic subunit TRM82 (450 aa).

Residues 69–82 (AAKKLKTNEGEAIE) show a composition bias toward basic and acidic residues. Positions 69-103 (AAKKLKTNEGEAIERPGNQRRVPLPGKDPKVPVPG) are disordered. WD repeat units lie at residues 108–147 (PVYQ…KDNC), 200–241 (GHVS…VIDK), and 245–285 (GHKE…LMSS).

The protein belongs to the WD repeat TRM82 family. Forms a heterodimer with the catalytic subunit TRM8.

The protein localises to the nucleus. It participates in tRNA modification; N(7)-methylguanine-tRNA biosynthesis. Functionally, required for the formation of N(7)-methylguanine at position 46 (m7G46) in tRNA. In the complex, it is required to stabilize and induce conformational changes of the catalytic subunit. The sequence is that of tRNA (guanine-N(7)-)-methyltransferase non-catalytic subunit TRM82 from Eremothecium gossypii (strain ATCC 10895 / CBS 109.51 / FGSC 9923 / NRRL Y-1056) (Yeast).